The following is a 616-amino-acid chain: Fatty acyl-CoA reductase 2, chloroplastic (616 aa).

Residues 1 to 14 constitute a chloroplast transit peptide; it reads MEALFLSSSSSSIV. Positions 133–143 match the NAD(P)H-binding motif; the sequence is FLITGSTGFLA. Active-site residues include Tyr-357 and Lys-361.

This sequence belongs to the fatty acyl-CoA reductase family. As to expression, expressed in the tapetum of anthers.

It is found in the plastid. The protein resides in the chloroplast. The enzyme catalyses a long-chain fatty acyl-CoA + 2 NADPH + 2 H(+) = a long-chain primary fatty alcohol + 2 NADP(+) + CoA. It carries out the reaction hexadecanoyl-CoA + 2 NADPH + 2 H(+) = hexadecan-1-ol + 2 NADP(+) + CoA. The catalysed reaction is hexadecanoyl-[ACP] + 2 NADPH + 2 H(+) = hexadecan-1-ol + holo-[ACP] + 2 NADP(+). Catalyzes the reduction of fatty acyl-CoA and -ACP (acyl carrier protein) substrates to fatty alcohols. Triggers the accumulation of C16 and C18 fatty alcohols; converts palmitoyl-acyl carrier protein to the corresponding C16:0 alcohol with NAD(P)H as electron donor, but seems inactive toward palmitoyl- or other acyl-coenzyme A. Also triggers the formation of some C16:0 aldehydes. Involved in the synthesis of the lipid component in sporopollenin. Required for exine patterning of pollen grain by mediating the formation of pollen wall substances. The polypeptide is Fatty acyl-CoA reductase 2, chloroplastic (Arabidopsis thaliana (Mouse-ear cress)).